The chain runs to 101 residues: NAD(P)H-quinone oxidoreductase subunit 4L, chloroplastic (101 aa).

A run of 3 helical transmembrane segments spans residues 2-22, 32-52, and 61-81; these read ILEHVLVLSAYLFLIGLYGLI, MCLELILNAVNMNLVTFSDFF, and IFCIFVIAIAAAEAAIGLAIV.

This sequence belongs to the complex I subunit 4L family. NDH is composed of at least 16 different subunits, 5 of which are encoded in the nucleus.

The protein resides in the plastid. Its subcellular location is the chloroplast thylakoid membrane. It catalyses the reaction a plastoquinone + NADH + (n+1) H(+)(in) = a plastoquinol + NAD(+) + n H(+)(out). It carries out the reaction a plastoquinone + NADPH + (n+1) H(+)(in) = a plastoquinol + NADP(+) + n H(+)(out). Its function is as follows. NDH shuttles electrons from NAD(P)H:plastoquinone, via FMN and iron-sulfur (Fe-S) centers, to quinones in the photosynthetic chain and possibly in a chloroplast respiratory chain. The immediate electron acceptor for the enzyme in this species is believed to be plastoquinone. Couples the redox reaction to proton translocation, and thus conserves the redox energy in a proton gradient. The chain is NAD(P)H-quinone oxidoreductase subunit 4L, chloroplastic from Draba nemorosa (Woodland whitlowgrass).